The primary structure comprises 101 residues: Small ribosomal subunit protein uS14 (101 aa).

The protein belongs to the universal ribosomal protein uS14 family. In terms of assembly, part of the 30S ribosomal subunit. Contacts proteins S3 and S10.

Its function is as follows. Binds 16S rRNA, required for the assembly of 30S particles and may also be responsible for determining the conformation of the 16S rRNA at the A site. The polypeptide is Small ribosomal subunit protein uS14 (Bartonella henselae (strain ATCC 49882 / DSM 28221 / CCUG 30454 / Houston 1) (Rochalimaea henselae)).